A 596-amino-acid chain; its full sequence is tRNA(Met) cytidine acetyltransferase TmcA (596 aa).

Residues Gln138, 160 to 169, and Arg285 contribute to the ATP site; that span reads GRGKSTLAGK. The N-acetyltransferase domain occupies 328–481; sequence SDLRRLFDAQ…SGYHSAMMLY (154 aa). Acetyl-CoA is bound by residues 406 to 408 and 413 to 419; these read IAV and QKQGIGK.

Belongs to the RNA cytidine acetyltransferase family. TmcA subfamily.

It is found in the cytoplasm. It carries out the reaction cytidine(34) in elongator tRNA(Met) + acetyl-CoA + ATP + H2O = N(4)-acetylcytidine(34) in elongator tRNA(Met) + ADP + phosphate + CoA + H(+). Its function is as follows. Catalyzes the formation of N(4)-acetylcytidine (ac(4)C) at the wobble position of tRNA(Met), by using acetyl-CoA as an acetyl donor and ATP (or GTP). This is tRNA(Met) cytidine acetyltransferase TmcA from Actinobacillus pleuropneumoniae serotype 5b (strain L20).